The following is a 429-amino-acid chain: 3-phosphoshikimate 1-carboxyvinyltransferase (429 aa).

Residues Lys23, Ser24, and Arg28 each coordinate 3-phosphoshikimate. Lys23 lines the phosphoenolpyruvate pocket. Phosphoenolpyruvate-binding residues include Gly95 and Arg123. 3-phosphoshikimate-binding residues include Ser168, Gln170, Asp316, and Lys343. Gln170 provides a ligand contact to phosphoenolpyruvate. The active-site Proton acceptor is Asp316. Phosphoenolpyruvate-binding residues include Arg347 and Arg389.

Belongs to the EPSP synthase family. As to quaternary structure, monomer.

The protein resides in the cytoplasm. It carries out the reaction 3-phosphoshikimate + phosphoenolpyruvate = 5-O-(1-carboxyvinyl)-3-phosphoshikimate + phosphate. The protein operates within metabolic intermediate biosynthesis; chorismate biosynthesis; chorismate from D-erythrose 4-phosphate and phosphoenolpyruvate: step 6/7. Its function is as follows. Catalyzes the transfer of the enolpyruvyl moiety of phosphoenolpyruvate (PEP) to the 5-hydroxyl of shikimate-3-phosphate (S3P) to produce enolpyruvyl shikimate-3-phosphate and inorganic phosphate. The polypeptide is 3-phosphoshikimate 1-carboxyvinyltransferase (Bacillus cereus (strain AH187)).